Consider the following 560-residue polypeptide: Embryonal Fyn-associated substrate (560 aa).

The SH3 domain occupies 5–68 (TSAQLARALY…PANRVKLLPA (64 aa)). 2 disordered regions span residues 176–219 (VVPQ…LYAA) and 241–372 (ANGE…NEYE). The span at 198–210 (AELERDPEWEGGR) shows a compositional bias: basic and acidic residues. A Phosphotyrosine; by SRC modification is found at tyrosine 253. Positions 259 to 268 (GPEPPSPEPP) are enriched in pro residues. Short sequence motifs (SH3-binding) lie at residues 304 to 310 (RPLPALP) and 334 to 340 (RPLPPPP). The segment covering 305–315 (PLPALPVSEAP) has biased composition (low complexity). Positions 351–361 (PEGDPECREVA) are enriched in basic and acidic residues. A divergent helix-loop-helix motif region spans residues 437–487 (FYAGQCQSHYSALQAAVAALVASTQANQPPCLFVPHGKRVVVAAHRLVFVG).

This sequence belongs to the CAS family. Post-translationally, phosphorylated on multiple tyrosine residues. Phosphorylated on tyrosines by FYN and SRC. In terms of tissue distribution, widely expressed. Higher levels found in placenta and embryo. Lower levels found in brain, brainstem, muscle and lung. No expression in liver and intestine.

In terms of biological role, docking protein which plays a central coordinating role for tyrosine-kinase-based signaling related to cell adhesion. May serve as an activator of SRC and a downstream effector. Interacts with the SH3 domain of FYN and with CRK, SRC, and YES. The polypeptide is Embryonal Fyn-associated substrate (Efs) (Mus musculus (Mouse)).